We begin with the raw amino-acid sequence, 207 residues long: MRLFRVLLLSAVAFALSPAQADERSIQRLTQLLDRAQTLTARFSQLSLDGSGTQLQETSGEMALKRPGLFRWHTDAPQEQLLVSNGKTVWLYDPDLEQVTVRSLDQRLTHTPALLLSGDLSKIGENFEITHKEAGGVVDFILKPKSKDTLFDNLRLSFRDGVVNDMQLIDGVGQRTNILFFGVKMNQSLDAAQFDFKVPEGTDVIQE.

The signal sequence occupies residues 1–21; the sequence is MRLFRVLLLSAVAFALSPAQA.

This sequence belongs to the LolA family. As to quaternary structure, monomer.

Its subcellular location is the periplasm. In terms of biological role, participates in the translocation of lipoproteins from the inner membrane to the outer membrane. Only forms a complex with a lipoprotein if the residue after the N-terminal Cys is not an aspartate (The Asp acts as a targeting signal to indicate that the lipoprotein should stay in the inner membrane). The chain is Outer-membrane lipoprotein carrier protein from Azotobacter vinelandii (strain DJ / ATCC BAA-1303).